The sequence spans 254 residues: Type III pantothenate kinase (254 aa).

6 to 13 (DVGNSNIV) provides a ligand contact to ATP. Substrate contacts are provided by residues Y100 and 107–110 (GADR). Catalysis depends on D109, which acts as the Proton acceptor. D129 contributes to the K(+) binding site. T132 provides a ligand contact to ATP. Residue T184 coordinates substrate.

Belongs to the type III pantothenate kinase family. In terms of assembly, homodimer. NH4(+) serves as cofactor. K(+) is required as a cofactor.

It localises to the cytoplasm. The catalysed reaction is (R)-pantothenate + ATP = (R)-4'-phosphopantothenate + ADP + H(+). The protein operates within cofactor biosynthesis; coenzyme A biosynthesis; CoA from (R)-pantothenate: step 1/5. Functionally, catalyzes the phosphorylation of pantothenate (Pan), the first step in CoA biosynthesis. The sequence is that of Type III pantothenate kinase from Pelobacter propionicus (strain DSM 2379 / NBRC 103807 / OttBd1).